The following is a 37-amino-acid chain: Large ribosomal subunit protein bL36 (37 aa).

Belongs to the bacterial ribosomal protein bL36 family.

The protein is Large ribosomal subunit protein bL36 of Laribacter hongkongensis (strain HLHK9).